We begin with the raw amino-acid sequence, 241 residues long: Enterotoxin type H (241 aa).

Positions 1-24 are cleaved as a signal peptide; that stretch reads MINKIKILFSFLALLLSFTSYAKA. C106 and C116 are joined by a disulfide. Zn(2+) contacts are provided by D191, H230, and D232.

The protein belongs to the staphylococcal/streptococcal toxin family. As to quaternary structure, interacts with host MHC class II molecules composed of alpha/HLA-DRA and beta/HLA-DRB1 chains. Interacts with host TCR alpha-chain TRAV27. Requires Zn(2+) as cofactor.

The protein localises to the secreted. In terms of biological role, staphylococcal enterotoxin that activates the host immune system by binding as unprocessed molecules to major histocompatibility (MHC) complex class II and T-cell receptor (TCR) molecules via their alpha domain, in particular TRAV27. In turn, this ternary complex activates a large number of T-lymphocytes initiating a systemic release of pro-inflammatory cytokines. Also causes the intoxication staphylococcal food poisoning syndrome. The illness characterized by high fever, hypotension, diarrhea, shock, and in some cases death. The chain is Enterotoxin type H (entH) from Staphylococcus aureus.